We begin with the raw amino-acid sequence, 361 residues long: G2/mitotic-specific cyclin-B1 (361 aa).

Residues M1–N13 are compositionally biased toward polar residues. The interval M1 to N33 is disordered.

It belongs to the cyclin family. Cyclin AB subfamily. Interacts with the CDK1 protein kinase to form a serine/threonine kinase holoenzyme complex also known as maturation promoting factor (MPF). The cyclin subunit imparts substrate specificity to the complex. Interacts with E3 ubiquitin-protein ligase etc-1. In terms of processing, ubiquitinated by etc-1 likely during meiosis, resulting in its degradation.

The protein resides in the cytoplasm. Essential for the control of the cell cycle at the G2/M (mitosis) transition. This chain is G2/mitotic-specific cyclin-B1 (cyb-1), found in Caenorhabditis elegans.